The sequence spans 114 residues: Large ribosomal subunit protein uL22 (114 aa).

This sequence belongs to the universal ribosomal protein uL22 family. Part of the 50S ribosomal subunit.

Its function is as follows. This protein binds specifically to 23S rRNA; its binding is stimulated by other ribosomal proteins, e.g. L4, L17, and L20. It is important during the early stages of 50S assembly. It makes multiple contacts with different domains of the 23S rRNA in the assembled 50S subunit and ribosome. The globular domain of the protein is located near the polypeptide exit tunnel on the outside of the subunit, while an extended beta-hairpin is found that lines the wall of the exit tunnel in the center of the 70S ribosome. This is Large ribosomal subunit protein uL22 from Streptococcus suis (strain 98HAH33).